Reading from the N-terminus, the 70-residue chain is Adenylate kinase (70 aa).

10–15 (GAGKGT) is a binding site for ATP. Residues 30-59 (STGDLFRANISKQTELGKLAKSYMDKGELV) are NMP. AMP is bound by residues Thr-31, Arg-36, and 57–59 (ELV).

This sequence belongs to the adenylate kinase family. As to quaternary structure, monomer.

It localises to the cytoplasm. It carries out the reaction AMP + ATP = 2 ADP. It participates in purine metabolism; AMP biosynthesis via salvage pathway; AMP from ADP: step 1/1. In terms of biological role, catalyzes the reversible transfer of the terminal phosphate group between ATP and AMP. Plays an important role in cellular energy homeostasis and in adenine nucleotide metabolism. The chain is Adenylate kinase (adk) from Streptomyces scabiei.